Consider the following 226-residue polypeptide: uncharacterized protein (226 aa).

In terms of domain architecture, N-acetyltransferase spans 75–226; that stretch reads YTIRNVTKDD…KGWLRMVKRI (152 aa).

The protein belongs to the acetyltransferase family.

This is an uncharacterized protein from Methanocaldococcus jannaschii (strain ATCC 43067 / DSM 2661 / JAL-1 / JCM 10045 / NBRC 100440) (Methanococcus jannaschii).